Reading from the N-terminus, the 552-residue chain is Chaperonin GroEL (552 aa).

Residues 30 to 33 (TLGP), Lys-51, 87 to 91 (DGTTT), Gly-415, 480 to 482 (NAA), and Asp-496 contribute to the ATP site.

The protein belongs to the chaperonin (HSP60) family. In terms of assembly, forms a cylinder of 14 subunits composed of two heptameric rings stacked back-to-back. Interacts with the co-chaperonin GroES.

It is found in the cytoplasm. The enzyme catalyses ATP + H2O + a folded polypeptide = ADP + phosphate + an unfolded polypeptide.. Functionally, together with its co-chaperonin GroES, plays an essential role in assisting protein folding. The GroEL-GroES system forms a nano-cage that allows encapsulation of the non-native substrate proteins and provides a physical environment optimized to promote and accelerate protein folding. In Verminephrobacter eiseniae (strain EF01-2), this protein is Chaperonin GroEL.